The following is a 433-amino-acid chain: Glutamate-1-semialdehyde 2,1-aminomutase (433 aa).

An N6-(pyridoxal phosphate)lysine modification is found at Lys-269.

It belongs to the class-III pyridoxal-phosphate-dependent aminotransferase family. HemL subfamily. Homodimer. Pyridoxal 5'-phosphate is required as a cofactor.

It localises to the cytoplasm. The enzyme catalyses (S)-4-amino-5-oxopentanoate = 5-aminolevulinate. The protein operates within porphyrin-containing compound metabolism; protoporphyrin-IX biosynthesis; 5-aminolevulinate from L-glutamyl-tRNA(Glu): step 2/2. The sequence is that of Glutamate-1-semialdehyde 2,1-aminomutase from Renibacterium salmoninarum (strain ATCC 33209 / DSM 20767 / JCM 11484 / NBRC 15589 / NCIMB 2235).